We begin with the raw amino-acid sequence, 515 residues long: Protein DETOXIFICATION 42 (515 aa).

The Cytoplasmic portion of the chain corresponds to 1-35; it reads MMSEDGYNTDFPRNPLYIFFSDFRSVLKFDELGLE. A helical transmembrane segment spans residues 36 to 56; sequence IARIALPAALALTADPIASLV. Residues 57 to 58 are Extracellular-facing; the sequence is DT. A helical transmembrane segment spans residues 59–79; the sequence is AFIGQIGPVELAAVGVSIALF. The Cytoplasmic segment spans residues 80-168; the sequence is NQVSRIAIFP…AKKRNIPSAS (89 aa). The chain crosses the membrane as a helical span at residues 169–189; sequence SALIIGGVLGLFQAVFLISAA. Residues 190 to 211 lie on the Extracellular side of the membrane; it reads KPLLSFMGVKHDSPMMRPSQRY. A helical membrane pass occupies residues 212–232; it reads LSLRSLGAPAVLLSLAAQGVF. Topologically, residues 233 to 242 are cytoplasmic; sequence RGFKDTTTPL. A helical transmembrane segment spans residues 243–263; the sequence is FATVIGDVTNIILDPIFIFVF. Over 264 to 266 the chain is Extracellular; sequence RLG. A helical transmembrane segment spans residues 267–287; that stretch reads VTGAATAHVISQYLMCGILLW. Residues 288–312 are Cytoplasmic-facing; it reads KLMGQVDIFNMSTKHLQFCRFMKNG. A helical transmembrane segment spans residues 313–333; that stretch reads FLLLMRVIAVTFCVTLSASLA. Residues 334-349 lie on the Extracellular side of the membrane; it reads AREGSTSMAAFQVCLQ. The helical transmembrane segment at 350–370 threads the bilayer; that stretch reads VWLATSLLADGYAVAGQAILA. At 371–390 the chain is on the cytoplasmic side; the sequence is SAFAKKDYKRAAATASRVLQ. A helical transmembrane segment spans residues 391 to 411; it reads LGLVLGFVLAVILGAGLHFGA. At 412–423 the chain is on the extracellular side; that stretch reads RVFTKDDKVLHL. A helical membrane pass occupies residues 424 to 444; it reads ISIGLPFVAGTQPINALAFVF. The Cytoplasmic portion of the chain corresponds to 445-453; sequence DGVNFGASD. The helical transmembrane segment at 454–474 threads the bilayer; sequence FGYAAASLVMVAIVSILCLLF. Residues 475-480 are Extracellular-facing; that stretch reads LSSTHG. Residues 481-501 form a helical membrane-spanning segment; that stretch reads FIGLWFGLTIYMSLRAAVGFW. At 502-515 the chain is on the cytoplasmic side; sequence RIGTGTGPWSFLRS.

This sequence belongs to the multi antimicrobial extrusion (MATE) (TC 2.A.66.1) family. As to expression, expressed in roots, but not in shoots. Detected in the mature regions of the root, extending from above the root-hair region to the root-shoot junction.

The protein resides in the cell membrane. Functionally, citrate transporter critical for aluminum tolerance. Responsible for citrate exudation into the rhizosphere to protect roots from aluminum toxicity. This is Protein DETOXIFICATION 42 from Arabidopsis thaliana (Mouse-ear cress).